The following is a 523-amino-acid chain: MDSFLSQPITIVLAILSVLLYNIWKIRKPSNKFQKGMKLPQLSFALPLIGHLHLLGNQIPLAKTFASFADKYGPIFQIRLGAYPTLVISNKEAIKECFTTNDKILASRTKSTHGILLGYNHASFACAPYGRFWAKIRKVTMLELLSSRRVESLRHVYESEIDTLVKDLSLYVKVGKVEVVISEWMERLTFNIITKMICGKRYFEYLQDVDDVEANGNIVKLIKEVMHISGELVPKDVIPILGWFGFEGEVLKSMKRVSRDLDEVVGKWVEEHIEKSDDGVNNSNEKQDLIDVMLSVIEDDPDSGNDRDTIIKANIVNLMIAGSDTTSTTMTWILVLLLNNMNALKRAQEEIDQHIGRDRKIESSDIKNLVYLQAIVKETLRLHPTLPLSIPHEATEDCNIQGYYVPKGTRLFTNVWKLHRDPSIWLEPEKFSPERFINENGEIDHESHQFEYLPFGLGRRACPGSMFATQVIHIAVARLIHLFDFEVPINEVVDMKQGTGLILSKFTPLKVLLTPRLPYELYQ.

The chain crosses the membrane as a helical span at residues 4-24 (FLSQPITIVLAILSVLLYNIW). C462 provides a ligand contact to heme.

This sequence belongs to the cytochrome P450 family. Mainly expressed in leaves and seed pods and, to a lower extent, in flowers and stems.

Its subcellular location is the membrane. Its pathway is steroid metabolism; cholesterol metabolism. Functionally, involved in the biosynthesis of spiroketal steroid and saponin natural products from cholesterol such as diosgenin and analogs (e.g. furostanol and spirostanol), plant defense compounds used as main precursors for the industrial production of steroid hormones. During the 5,6-spiroketalization of cholesterol, may catalyze the 27-monohydroxylation of furostanol-type steroid to an intermediate product that undergoes a stereospecific formation of the terminal heterocycle to yield diosgenin. The polypeptide is Cytochrome P450 CYP82J17 (Trigonella foenum-graecum (Fenugreek)).